The sequence spans 316 residues: CXXC-type zinc finger protein 5 (316 aa).

Residues 1-10 (MSSLGGGSQD) are compositionally biased toward gly residues. The tract at residues 1–95 (MSSLGGGSQD…SGGAGSMMGG (95 aa)) is disordered. Low complexity-rich tracts occupy residues 11–27 (AGGS…SGSG) and 36–50 (SATV…VADD). The segment at 250 to 291 (GKKKRKRCGMCAPCRRRINCEQCSSCRNRKTGHQICKFRKCE) adopts a CXXC-type zinc-finger fold. A Nuclear localization signal motif is present at residues 251–256 (KKKRKR). Zn(2+)-binding residues include Cys-257, Cys-260, Cys-263, Cys-269, Cys-272, Cys-275, Cys-285, and Cys-290.

As to quaternary structure, interacts with DVL1. Interacts with RBPJ. As to expression, expressed in neural stem cells (at protein level). Expressed in the dorsal telencephalon.

The protein resides in the nucleus. The protein localises to the cytoplasm. Functionally, may indirectly participate in activation of the NF-kappa-B and MAPK pathways. Required for DNA damage-induced ATM phosphorylation, p53 activation and cell cycle arrest. Involved in myelopoiesis. Acts as a mediator of BMP4-mediated modulation of canonical Wnt signaling activity in neural stem cells. Binds to the oxygen responsive element of COX4I2 and represses its transcription under hypoxia conditions (4% oxygen), as well as normoxia conditions (20% oxygen). May repress COX4I2 transactivation induced by CHCHD2 and RBPJ. Binds preferentially to DNA containing cytidine-phosphate-guanosine (CpG) dinucleotides over CpH (H=A, T, and C), hemimethylated-CpG and hemimethylated-hydroxymethyl-CpG. The chain is CXXC-type zinc finger protein 5 (Cxxc5) from Rattus norvegicus (Rat).